Here is a 469-residue protein sequence, read N- to C-terminus: 3-isopropylmalate dehydratase large subunit (469 aa).

[4Fe-4S] cluster contacts are provided by cysteine 347, cysteine 407, and cysteine 410. The segment covering 424–441 has biased composition (polar residues); that stretch reads SASSSNRNFKGRQGSPSG. The tract at residues 424–443 is disordered; it reads SASSSNRNFKGRQGSPSGRT.

It belongs to the aconitase/IPM isomerase family. LeuC type 1 subfamily. As to quaternary structure, heterodimer of LeuC and LeuD. [4Fe-4S] cluster serves as cofactor.

It catalyses the reaction (2R,3S)-3-isopropylmalate = (2S)-2-isopropylmalate. It functions in the pathway amino-acid biosynthesis; L-leucine biosynthesis; L-leucine from 3-methyl-2-oxobutanoate: step 2/4. Its function is as follows. Catalyzes the isomerization between 2-isopropylmalate and 3-isopropylmalate, via the formation of 2-isopropylmaleate. The sequence is that of 3-isopropylmalate dehydratase large subunit from Prochlorococcus marinus (strain MIT 9312).